Here is a 397-residue protein sequence, read N- to C-terminus: Decapping and exoribonuclease protein (397 aa).

Basic and acidic residues predominate over residues 1-20; sequence MESRGTKREAGKIEVAEPRN. The tract at residues 1–37 is disordered; the sequence is MESRGTKREAGKIEVAEPRNKLPRPAPSLPTDPALYS. Residue Arg-58 participates in substrate binding. The segment at 67–88 is disordered; that stretch reads LRYYSPPPTNGQSPNFDLRDGY. Substrate contacts are provided by residues Glu-101 and 131-133; that span reads WRG. Residue Glu-192 coordinates Mg(2+). Cys-217 and Glu-234 together coordinate substrate. Mg(2+)-binding residues include Glu-234, Asp-236, Glu-253, and Leu-254. Positions 255 and 280 each coordinate substrate. Thr-392 is modified (phosphothreonine). The residue at position 394 (Ser-394) is a Phosphoserine.

This sequence belongs to the DXO/Dom3Z family. It depends on Mg(2+) as a cofactor.

It localises to the nucleus. It carries out the reaction a 5'-end triphospho-ribonucleoside in mRNA + H2O = a 5'-end phospho-ribonucleoside in mRNA + diphosphate + H(+). It catalyses the reaction a 5'-end NAD(+)-phospho-ribonucleoside in mRNA + H2O = a 5'-end phospho-ribonucleoside in mRNA + NAD(+) + H(+). The catalysed reaction is a 5'-end NAD(+)-phospho-ribonucleoside in snoRNA + H2O = a 5'-end phospho-ribonucleoside in snoRNA + NAD(+) + H(+). The enzyme catalyses a 5'-end (N(7)-methyl 5'-triphosphoguanosine)-ribonucleoside-ribonucleotide in mRNA + H2O = a (N(7)-methyl 5'-triphosphoguanosine)-nucleoside + a 5'-end phospho-ribonucleoside in mRNA + H(+). It carries out the reaction a 5'-end FAD-phospho-ribonucleoside in mRNA + H2O = a 5'-end phospho-ribonucleoside in mRNA + FAD + H(+). It catalyses the reaction a 5'-end CoA-ribonucleoside in mRNA + H2O = 3'-dephospho-CoA + a 5'-end phospho-ribonucleoside in mRNA + H(+). Functionally, decapping enzyme for NAD-capped RNAs: specifically hydrolyzes the nicotinamide adenine dinucleotide (NAD) cap from a subset of RNAs by removing the entire NAD moiety from the 5'-end of an NAD-capped RNA. The NAD-cap is present at the 5'-end of some RNAs and snoRNAs. In contrast to the canonical 5'-end N7 methylguanosine (m7G) cap, the NAD cap promotes mRNA decay. Preferentially acts on NAD-capped transcripts in response to environmental stress. Also acts as a non-canonical decapping enzyme that removes the entire cap structure of m7G capped or incompletely capped RNAs and mediates their subsequent degradation. Specifically degrades pre-mRNAs with a defective 5'-end m7G cap and is part of a pre-mRNA capping quality control. Has decapping activity toward incomplete 5'-end m7G cap mRNAs such as unmethylated 5'-end-capped RNA (cap0), while it has no activity toward 2'-O-ribose methylated m7G cap (cap1). In contrast to canonical decapping enzymes DCP2 and NUDT16, which cleave the cap within the triphosphate linkage, the decapping activity releases the entire cap structure GpppN and a 5'-end monophosphate RNA. Also has 5'-3' exoribonuclease activities: The 5'-end monophosphate RNA is then degraded by the 5'-3' exoribonuclease activity, enabling this enzyme to decap and degrade incompletely capped mRNAs. Also possesses RNA 5'-pyrophosphohydrolase activity by hydrolyzing the 5'-end triphosphate to release pyrophosphates. Exhibits decapping activity towards FAD-capped RNAs. Exhibits decapping activity towards dpCoA-capped RNAs in vitro. This Bos taurus (Bovine) protein is Decapping and exoribonuclease protein.